Here is a 332-residue protein sequence, read N- to C-terminus: Tetraacyldisaccharide 4'-kinase (332 aa).

60–67 lines the ATP pocket; sequence TVGGTGKT.

It belongs to the LpxK family.

It carries out the reaction a lipid A disaccharide + ATP = a lipid IVA + ADP + H(+). Its pathway is glycolipid biosynthesis; lipid IV(A) biosynthesis; lipid IV(A) from (3R)-3-hydroxytetradecanoyl-[acyl-carrier-protein] and UDP-N-acetyl-alpha-D-glucosamine: step 6/6. Functionally, transfers the gamma-phosphate of ATP to the 4'-position of a tetraacyldisaccharide 1-phosphate intermediate (termed DS-1-P) to form tetraacyldisaccharide 1,4'-bis-phosphate (lipid IVA). The sequence is that of Tetraacyldisaccharide 4'-kinase from Pseudomonas aeruginosa (strain LESB58).